Here is a 266-residue protein sequence, read N- to C-terminus: Protein SCO2 homolog, mitochondrial (266 aa).

The N-terminal 41 residues, 1–41, are a transit peptide targeting the mitochondrion; that stretch reads MLLLTRSPTAWHRLSQLKPRVLPGTLGGQALHLRSWLLSRQ. The Mitochondrial matrix segment spans residues 42–60; it reads GPAETGGQGQPQGPGLRTR. The helical transmembrane segment at 61 to 78 threads the bilayer; that stretch reads LLITGLFGAGLGGAWLAL. Topologically, residues 79 to 266 are mitochondrial intermembrane; it reads RAEKERLQQQ…HMAAFRSVLS (188 aa). In terms of domain architecture, Thioredoxin spans 85 to 259; it reads LQQQKRTEAL…ISDSVRRHMA (175 aa). C133, C137, and H224 together coordinate Cu cation. A disulfide bridge links C133 with C137.

It belongs to the SCO1/2 family. As to quaternary structure, homodimer. Interacts with COA6. Found in a complex with TMEM177, COX20, COA6, MT-CO2/COX2, COX18 and SCO1. Interacts with TMEM177 in a COX20-dependent manner. Interacts with COX20 in a MT-CO2/COX2- and COX18-dependent manner. Interacts with COX16. As to expression, ubiquitous.

It is found in the mitochondrion inner membrane. Copper metallochaperone essential for the synthesis and maturation of cytochrome c oxidase subunit II (MT-CO2/COX2) by facilitating the incorporation of copper into the Cu(A) site of MT-CO2/COX2. Could also act as a thiol-disulfide oxidoreductase to regulate the redox state of the cysteines in SCO1 during maturation of MT-CO2/COX2. In Homo sapiens (Human), this protein is Protein SCO2 homolog, mitochondrial (SCO2).